The chain runs to 304 residues: MAATLPLSPINHQLCRFGNNSLTTHRFCSPGFLISSPCFIGLTGMGSATQLRARRSLISSAVATNSLLHDVGATVAVLGGAYALVLSFESLTKRNVIQQSLSRKLVHILSGLLFVLAWPIFSGSTEARYFAAFVPLVNGLRLVINGLSISPNSMLIKSVTREGRAEELLKGPLFYVLALLFSAVFFWRESPIGMISLAMMCGGDGIADIMGRKFGSTKIPYNPRKSWAGSISMFIFGFFISIALLYYYSSLGYLHMNWETTLQRVAMVSMVATVVESLPITDQLDDNISVPLATILAAYLSFGY.

The transit peptide at 1–59 (MAATLPLSPINHQLCRFGNNSLTTHRFCSPGFLISSPCFIGLTGMGSATQLRARRSLIS) directs the protein to the chloroplast. 6 helical membrane passes run 71-91 (VGATVAVLGGAYALVLSFESL), 105-125 (LVHILSGLLFVLAWPIFSGST), 129-149 (YFAAFVPLVNGLRLVINGLSI), 167-187 (ELLKGPLFYVLALLFSAVFFW), 191-211 (PIGMISLAMMCGGDGIADIMG), and 227-247 (WAGSISMFIFGFFISIALLYY).

The protein belongs to the polyprenol kinase family.

It localises to the plastid. It is found in the chloroplast membrane. It catalyses the reaction phytol + CTP = phytyl phosphate + CDP + H(+). The protein operates within cofactor biosynthesis; tocopherol biosynthesis. Kinase involved in the activation and reutilization of phytol from chlorophyll degradation in plant metabolism, including tocopherol biosynthesis. Catalyzes the conversion of phytol to phytol monophosphate (PMP) in the presence of CTP or UTP. No activity with ATP or GTP as phosphoryl donor. The sequence is that of Phytol kinase 1, chloroplastic from Arabidopsis thaliana (Mouse-ear cress).